Here is a 1378-residue protein sequence, read N- to C-terminus: DNA-directed RNA polymerase subunit beta (1378 aa).

It belongs to the RNA polymerase beta chain family. As to quaternary structure, the RNAP catalytic core consists of 2 alpha, 1 beta, 1 beta' and 1 omega subunit. When a sigma factor is associated with the core the holoenzyme is formed, which can initiate transcription.

The enzyme catalyses RNA(n) + a ribonucleoside 5'-triphosphate = RNA(n+1) + diphosphate. Functionally, DNA-dependent RNA polymerase catalyzes the transcription of DNA into RNA using the four ribonucleoside triphosphates as substrates. The chain is DNA-directed RNA polymerase subunit beta from Ruegeria pomeroyi (strain ATCC 700808 / DSM 15171 / DSS-3) (Silicibacter pomeroyi).